A 274-amino-acid chain; its full sequence is Putative pyruvate, phosphate dikinase regulatory protein (274 aa).

Residue 151 to 158 (GVSRTSKT) participates in ADP binding.

Belongs to the pyruvate, phosphate/water dikinase regulatory protein family. PDRP subfamily.

It carries out the reaction N(tele)-phospho-L-histidyl/L-threonyl-[pyruvate, phosphate dikinase] + ADP = N(tele)-phospho-L-histidyl/O-phospho-L-threonyl-[pyruvate, phosphate dikinase] + AMP + H(+). The catalysed reaction is N(tele)-phospho-L-histidyl/O-phospho-L-threonyl-[pyruvate, phosphate dikinase] + phosphate + H(+) = N(tele)-phospho-L-histidyl/L-threonyl-[pyruvate, phosphate dikinase] + diphosphate. Bifunctional serine/threonine kinase and phosphorylase involved in the regulation of the pyruvate, phosphate dikinase (PPDK) by catalyzing its phosphorylation/dephosphorylation. In Pelagibacter ubique (strain HTCC1062), this protein is Putative pyruvate, phosphate dikinase regulatory protein.